A 1358-amino-acid chain; its full sequence is MSYSYAEKKRIRKEFGVLPHILDVPYLLSIQTESYKKFLTVDAAKGRLHSGLEIVLKQSFPVESKNGQYELHYVDYQIGEPTFDETECQVRGATYDAPLNVKLRLVVYNKDALPNEKIVEDIREEYVYMGDIPLMTTNGTFIINGTERVVVSQLHRSPGVFFSKDDSEEGAFSARIIPYRGSWLDFEFDSKGIIWARIDRKRKFCATVILKALGYTQEQILENFSESKTITFNSKGFALRLDNLSNMKGELLKFDIVDAQDNVIVKKNKKLTSRDVKKIKDAGVDSVAIDFDLVSTLRVAKDIVNEATGEVIAYANDDVTESLLESCVEVGMLELEVIDFITTERGRYISDTLKYDLTRNTDEALVEIYKVLRPGDPPAAASVKALFEGLFFIESRYSLSDIGRMKLNARLGSDKVSKDIYTLENSDIVGVIEELINIRDGKGKVDDIDHLGNRRVRSVGEMVENQFRIGLYRVEKGIRESMSLVHKDKLMPKDIVNSKPITAAIKEFFTSGALSQFMDQDNPLSEVTHKRRISALGPGGLSRDRAGFEVRDVHATHYGRLCPIETPEGPNIGLINSLASYARVNDYGFLEAPYRKVVDGKVTDEIEYLSAIDEDNYVIAQASTKLDENNHFVEDIIQCRSGGEAIFTESSRVQYMDVSAKQMVSAAAALIPFLEHDDANRVLMGANMQRQAVPTLKSEKPLVGTGMEKIVARDSGNCIIARNVGEVAEVDSNRIVIKVDTEKSQTSNLVDIYSLTKFKRSNKNTCINQRPIVNVGDKVEAGDILADGFATDFGELSLGHNLMVAFMPWNGYNFEDSILLSERIVKDDKYTSIHIEEFTCVARDTKLGPEEITADIPNVSESSLAKLDESGIVHIGANVEAGDILVAKITPKAEQQLTPEERLLRAIFNEKASNVVDSSLRMPSGTSGTVISVQVFENDKGGKSKRALKIEKELIDKARKDFDEEFAVIESVVKSSIEQEVVGAKIQKAKGLKKGAILTKEFLATLPLSKWLEISFEDEKLEEKVQNAREYYEEAKIAIDAKFEAKKKSITQSNELSPGVLKTVKVFVAIKKRIQPGDKMAGRHGNKGVVSRVLPVEDMPYMEDGTPVDVCLNPLGIPSRMNIGQILEAHLGLASYGLGKKIEKTLEKTRKAAELRKTLEEVYNSVGDKKVNLEALNDEEILTLCDNLKGGVPIATPVFDGAKEEDIKSLLKIGGFATNGQMKLFDGRTGKPFDRHVTVGYMYMLKLDHLVDDKMHARSTGSYSLVTQQPLGGKAQFGGQRFGEMEVWALQAYGAAYTLREMLTVKSDDIAGRSKMYKNIVDGKLTMNVDVPESFNVLRNEVRALGIDMDFDYSSEEE.

The protein belongs to the RNA polymerase beta chain family. The RNAP catalytic core consists of 2 alpha, 1 beta, 1 beta' and 1 omega subunit. When a sigma factor is associated with the core the holoenzyme is formed, which can initiate transcription.

It catalyses the reaction RNA(n) + a ribonucleoside 5'-triphosphate = RNA(n+1) + diphosphate. Its function is as follows. DNA-dependent RNA polymerase catalyzes the transcription of DNA into RNA using the four ribonucleoside triphosphates as substrates. The chain is DNA-directed RNA polymerase subunit beta from Francisella tularensis subsp. holarctica (strain FTNF002-00 / FTA).